The primary structure comprises 380 residues: Genome polyprotein (380 aa).

2 disordered regions span residues G54–I154 and G349–H380. Over residues Q67–G84 the composition is skewed to low complexity. Composition is skewed to gly residues over residues A85 to G99 and S106 to S123. Residues N129 to G140 are compositionally biased toward low complexity.

Belongs to the potyviridae genome polyprotein family. Post-translationally, genome polyprotein of potyviruses undergoes post-translational proteolytic processing by the main proteinase NIa-pro resulting in the production of at least ten individual proteins. The P1 proteinase and the HC-pro cleave only their respective C-termini autocatalytically. 6K1 is essential for proper proteolytic separation of P3 from CI.

It is found in the virion. It carries out the reaction RNA(n) + a ribonucleoside 5'-triphosphate = RNA(n+1) + diphosphate. Functionally, an RNA-dependent RNA polymerase that plays an essential role in the virus replication. Its function is as follows. Involved in aphid transmission, cell-to-cell and systemis movement, encapsidation of the viral RNA and in the regulation of viral RNA amplification. This is Genome polyprotein from Sorghum halepense (Johnson grass).